The following is an 878-amino-acid chain: Alanine--tRNA ligase (878 aa).

Positions 567, 571, 669, and 673 each coordinate Zn(2+).

The protein belongs to the class-II aminoacyl-tRNA synthetase family. Zn(2+) serves as cofactor.

It is found in the cytoplasm. It carries out the reaction tRNA(Ala) + L-alanine + ATP = L-alanyl-tRNA(Ala) + AMP + diphosphate. Functionally, catalyzes the attachment of alanine to tRNA(Ala) in a two-step reaction: alanine is first activated by ATP to form Ala-AMP and then transferred to the acceptor end of tRNA(Ala). Also edits incorrectly charged Ser-tRNA(Ala) and Gly-tRNA(Ala) via its editing domain. The sequence is that of Alanine--tRNA ligase from Rickettsia felis (strain ATCC VR-1525 / URRWXCal2) (Rickettsia azadi).